A 345-amino-acid polypeptide reads, in one-letter code: Holliday junction branch migration complex subunit RuvB (345 aa).

The interval 1–186 is large ATPase domain (RuvB-L); sequence MSTDPDEREV…FGFTAHMDFY (186 aa). Residues L25, R26, G67, K70, T71, S72, 133–135, R176, Y186, and R223 contribute to the ATP site; that span reads EDF. T71 is a binding site for Mg(2+). The segment at 187 to 257 is small ATPAse domain (RuvB-S); it reads EPAELERVLV…VAKAALAVYD (71 aa). The head domain (RuvB-H) stretch occupies residues 260 to 345; that stretch reads ELGLDRLDRA…AGANQPGLFE (86 aa). Residues R315 and R320 each contribute to the DNA site.

It belongs to the RuvB family. As to quaternary structure, homohexamer. Forms an RuvA(8)-RuvB(12)-Holliday junction (HJ) complex. HJ DNA is sandwiched between 2 RuvA tetramers; dsDNA enters through RuvA and exits via RuvB. An RuvB hexamer assembles on each DNA strand where it exits the tetramer. Each RuvB hexamer is contacted by two RuvA subunits (via domain III) on 2 adjacent RuvB subunits; this complex drives branch migration. In the full resolvosome a probable DNA-RuvA(4)-RuvB(12)-RuvC(2) complex forms which resolves the HJ.

The protein localises to the cytoplasm. It catalyses the reaction ATP + H2O = ADP + phosphate + H(+). The RuvA-RuvB-RuvC complex processes Holliday junction (HJ) DNA during genetic recombination and DNA repair, while the RuvA-RuvB complex plays an important role in the rescue of blocked DNA replication forks via replication fork reversal (RFR). RuvA specifically binds to HJ cruciform DNA, conferring on it an open structure. The RuvB hexamer acts as an ATP-dependent pump, pulling dsDNA into and through the RuvAB complex. RuvB forms 2 homohexamers on either side of HJ DNA bound by 1 or 2 RuvA tetramers; 4 subunits per hexamer contact DNA at a time. Coordinated motions by a converter formed by DNA-disengaged RuvB subunits stimulates ATP hydrolysis and nucleotide exchange. Immobilization of the converter enables RuvB to convert the ATP-contained energy into a lever motion, pulling 2 nucleotides of DNA out of the RuvA tetramer per ATP hydrolyzed, thus driving DNA branch migration. The RuvB motors rotate together with the DNA substrate, which together with the progressing nucleotide cycle form the mechanistic basis for DNA recombination by continuous HJ branch migration. Branch migration allows RuvC to scan DNA until it finds its consensus sequence, where it cleaves and resolves cruciform DNA. The protein is Holliday junction branch migration complex subunit RuvB of Mycobacterium ulcerans (strain Agy99).